The primary structure comprises 119 residues: 5-hydroxyisourate hydrolase (119 aa).

Substrate contacts are provided by His-10, Arg-48, and Tyr-116.

The protein belongs to the transthyretin family. 5-hydroxyisourate hydrolase subfamily. Homotetramer.

The catalysed reaction is 5-hydroxyisourate + H2O = 5-hydroxy-2-oxo-4-ureido-2,5-dihydro-1H-imidazole-5-carboxylate + H(+). The protein operates within purine metabolism; urate degradation; (S)-allantoin from urate: step 2/3. Its function is as follows. Catalyzes the hydrolysis of 5-hydroxyisourate (HIU) to 2-oxo-4-hydroxy-4-carboxy-5-ureidoimidazoline (OHCU). This Deinococcus radiodurans (strain ATCC 13939 / DSM 20539 / JCM 16871 / CCUG 27074 / LMG 4051 / NBRC 15346 / NCIMB 9279 / VKM B-1422 / R1) protein is 5-hydroxyisourate hydrolase.